Reading from the N-terminus, the 476-residue chain is MPSLSAKNQAFFNEPACERNRSKDFKVRKKGCSQPPMPGAAAGGCAFDGAKVALQPITNVAHLIHAPLACEGNSWDNRGTASSSHMLWRTSFTTDVTEFDVVMGHSERKLFKAIREINEAYAPAAVFVYATCVTALIGDDIDAVCRRAAEKFGLPVVPVNAPGFVGSKNLGNKLAGEALLDHVIGTVEPDDARSSDINILGEFNLSGEFWQVRPLLDKLGVRVRACIPGDSRYLDIATAHRARAAMMVCSTALINLARKMLERWDIPFFEGSFYGITDTSEALRQIAGLLVKQGAGPDLISRTEALIVEEEARAWRRLEVYRPRLQGKRVLLNTGGVKSWSVAHALMEIGLEIVGTSIKKSTDNDKERLKQMLTNDSRMSGATTPRELYSALSDHKADIMLSGGRTQFIALKAKMPWLDINQERQHSYAGYHGVVELARQIDLSIHNPIWAQVREAAPWEMAPARGEEMSEEEALL.

This sequence belongs to the NifD/NifK/NifE/NifN family.

The protein operates within cofactor biosynthesis; Fe-Mo cofactor biosynthesis. This protein may play a role in the biosynthesis of the prosthetic group of nitrogenase (FeMo cofactor). This Rhizobium meliloti (strain 1021) (Ensifer meliloti) protein is Nitrogenase iron-molybdenum cofactor biosynthesis protein NifE (nifE).